We begin with the raw amino-acid sequence, 506 residues long: Gamma-aminobutyric acid receptor subunit epsilon (506 aa).

Residues 1-17 form the signal peptide; it reads MLPKVLLMLLNMFLALQ. At 18–277 the chain is on the extracellular side; sequence WRVGPHIKLE…MTFFFNVSRR (260 aa). Residues 32-65 are disordered; sequence AQDKVVFGPQPQPSGKKLPARETELTADHTTERP. Basic and acidic residues predominate over residues 50-65; it reads PARETELTADHTTERP. A glycan (N-linked (GlcNAc...) asparagine) is linked at Asn135. Residues Cys196 and Cys210 are joined by a disulfide bond. A glycan (N-linked (GlcNAc...) asparagine) is linked at Asn253. A helical membrane pass occupies residues 278 to 298; the sequence is FGFIVFQNYIPSSVTTMLSWV. Residues 299 to 308 lie on the Cytoplasmic side of the membrane; sequence SFWIKIEAAA. The helical transmembrane segment at 309–328 threads the bilayer; that stretch reads ARASVGVSSVLTMATLGTFS. At 329–344 the chain is on the extracellular side; sequence RKNFPRVSYLTALDFY. The chain crosses the membrane as a helical span at residues 345-365; the sequence is IAICFVLCFCTLLEFTVLNFL. At 366–485 the chain is on the cytoplasmic side; sequence TYNNIERQAS…HVYRLDNYSR (120 aa). A helical membrane pass occupies residues 486-506; it reads VLFPITFFFFNVVYWVICLNL.

Belongs to the ligand-gated ion channel (TC 1.A.9) family. Gamma-aminobutyric acid receptor (TC 1.A.9.5) subfamily. GABRE sub-subfamily. In terms of assembly, heteropentamer, formed by a combination of alpha (GABRA1-6), beta (GABRB1-3), gamma (GABRG1-3), delta (GABRD), epsilon (GABRE), rho (GABRR1-3), pi (GABRP) and theta (GABRQ) chains, each subunit exhibiting distinct physiological and pharmacological properties. Expressed in brain and heart. Strongly expressed in locus ceruleus from the first postnatal day. Weakly expressed in other brainstem nuclei and in the hypothalamus. Found in the cerebral cortex of pups.

It is found in the cell membrane. Its subcellular location is the postsynaptic cell membrane. The enzyme catalyses chloride(in) = chloride(out). Functionally, epsilon subunit of the heteropentameric ligand-gated chloride channel gated by gamma-aminobutyric acid (GABA), a major inhibitory neurotransmitter in the brain. GABA-gated chloride channels, also named GABA(A) receptors (GABAAR), consist of five subunits arranged around a central pore and contain GABA active binding site(s) located at the alpha and beta subunit interfaces. When activated by GABA, GABAARs selectively allow the flow of chloride anions across the cell membrane down their electrochemical gradient. GABARs containing epsilon subunit may also permit spontaneous chloride channel activity while preserving the structural information required for GABA-gated openings. GABARs containing epsilon subunit may regulate cardiac function. This is Gamma-aminobutyric acid receptor subunit epsilon from Rattus norvegicus (Rat).